A 273-amino-acid chain; its full sequence is Mitochondrial distribution and morphology protein 12 (273 aa).

Residues 1–260 enclose the SMP-LTD domain; that stretch reads MSFDINWEQL…WPSWINFDFY (260 aa). Residues 76–98 form a disordered region; the sequence is MSAEEETEGSDDEGYGGDRVRNR. Over residues 78–90 the composition is skewed to acidic residues; it reads AEEETEGSDDEGY.

Belongs to the MDM12 family. As to quaternary structure, component of the ER-mitochondria encounter structure (ERMES) or MDM complex, composed of MMM1, MDM10, MDM12 and MDM34. An MMM1 homodimer associates with one molecule of MDM12 on each side in a pairwise head-to-tail manner, and the SMP-LTD domains of MMM1 and MDM12 generate a continuous hydrophobic tunnel for phospholipid trafficking.

It is found in the mitochondrion outer membrane. The protein resides in the endoplasmic reticulum membrane. Its function is as follows. Component of the ERMES/MDM complex, which serves as a molecular tether to connect the endoplasmic reticulum (ER) and mitochondria. Components of this complex are involved in the control of mitochondrial shape and protein biogenesis, and function in nonvesicular lipid trafficking between the ER and mitochondria. MDM12 is required for the interaction of the ER-resident membrane protein MMM1 and the outer mitochondrial membrane-resident beta-barrel protein MDM10. The MDM12-MMM1 subcomplex functions in the major beta-barrel assembly pathway that is responsible for biogenesis of all mitochondrial outer membrane beta-barrel proteins, and acts in a late step after the SAM complex. The MDM10-MDM12-MMM1 subcomplex further acts in the TOM40-specific pathway after the action of the MDM12-MMM1 complex. Essential for establishing and maintaining the structure of mitochondria and maintenance of mtDNA nucleoids. The protein is Mitochondrial distribution and morphology protein 12 of Vanderwaltozyma polyspora (strain ATCC 22028 / DSM 70294 / BCRC 21397 / CBS 2163 / NBRC 10782 / NRRL Y-8283 / UCD 57-17) (Kluyveromyces polysporus).